The sequence spans 521 residues: Anthranilate synthase component 1 (521 aa).

L-tryptophan is bound by residues T40 and 292–294; that span reads PYM. 329–330 provides a ligand contact to chorismate; that stretch reads GT. Mg(2+) is bound at residue E362. Chorismate-binding positions include Y450, R470, 484–486, and G486; that span reads GAG. A Mg(2+)-binding site is contributed by E499.

The protein belongs to the anthranilate synthase component I family. Heterotetramer consisting of two non-identical subunits: a beta subunit (TrpG) and a large alpha subunit (TrpE). Mg(2+) is required as a cofactor.

It catalyses the reaction chorismate + L-glutamine = anthranilate + pyruvate + L-glutamate + H(+). Its pathway is amino-acid biosynthesis; L-tryptophan biosynthesis; L-tryptophan from chorismate: step 1/5. With respect to regulation, feedback inhibited by tryptophan. Part of a heterotetrameric complex that catalyzes the two-step biosynthesis of anthranilate, an intermediate in the biosynthesis of L-tryptophan. In the first step, the glutamine-binding beta subunit (TrpG) of anthranilate synthase (AS) provides the glutamine amidotransferase activity which generates ammonia as a substrate that, along with chorismate, is used in the second step, catalyzed by the large alpha subunit of AS (TrpE) to produce anthranilate. In the absence of TrpG, TrpE can synthesize anthranilate directly from chorismate and high concentrations of ammonia. The protein is Anthranilate synthase component 1 (trpE) of Buchnera aphidicola subsp. Acyrthosiphon pisum (strain APS) (Acyrthosiphon pisum symbiotic bacterium).